A 1030-amino-acid polypeptide reads, in one-letter code: Carbamoyl phosphate synthase arginine-specific large chain (1030 aa).

The tract at residues 1–401 is carboxyphosphate synthetic domain; sequence MPKDTSISSI…AIQKAAASLE (401 aa). ATP is bound by residues R129, R169, G175, G176, K208, I210, E215, G241, V242, H243, Q284, and E298. The 195-residue stretch at 133–327 folds into the ATP-grasp 1 domain; sequence RSLMNELKQP…IAKMAAKLAV (195 aa). Q284, E298, and N300 together coordinate Mg(2+). Mn(2+) contacts are provided by Q284, E298, and N300. The tract at residues 402 to 548 is oligomerization domain; that stretch reads LKNIGTHLPE…YSTYFGETDG (147 aa). A carbamoyl phosphate synthetic domain region spans residues 549–928; it reads DISRKEKKRA…ALKKIYTRVW (380 aa). The region spanning 675-863 is the ATP-grasp 2 domain; the sequence is YQLLDELGLK…MIPLATRLLA (189 aa). Positions 711, 748, 750, 754, 779, 780, 781, 782, 822, and 834 each coordinate ATP. Mg(2+)-binding residues include Q822, E834, and N836. Mn(2+) is bound by residues Q822, E834, and N836. The 103-residue stretch at 925–1027 folds into the MGS-like domain; it reads TRVWSQKGSI…KDLYKKEVAS (103 aa). Residues 929-1030 form an allosteric domain region; that stretch reads SQKGSIYLQN…YKKEVASCTQ (102 aa).

This sequence belongs to the CarB family. In terms of assembly, composed of two chains; the small (or glutamine) chain promotes the hydrolysis of glutamine to ammonia, which is used by the large (or ammonia) chain to synthesize carbamoyl phosphate. Tetramer of heterodimers (alpha,beta)4. Mg(2+) is required as a cofactor. Mn(2+) serves as cofactor.

It carries out the reaction hydrogencarbonate + L-glutamine + 2 ATP + H2O = carbamoyl phosphate + L-glutamate + 2 ADP + phosphate + 2 H(+). It catalyses the reaction hydrogencarbonate + NH4(+) + 2 ATP = carbamoyl phosphate + 2 ADP + phosphate + 2 H(+). It participates in amino-acid biosynthesis; L-arginine biosynthesis; carbamoyl phosphate from bicarbonate: step 1/1. Large subunit of the glutamine-dependent carbamoyl phosphate synthetase (CPSase). CPSase catalyzes the formation of carbamoyl phosphate from the ammonia moiety of glutamine, carbonate, and phosphate donated by ATP, constituting the first step of the biosynthetic pathway leading to arginine and/or urea. The large subunit (synthetase) binds the substrates ammonia (free or transferred from glutamine from the small subunit), hydrogencarbonate and ATP and carries out an ATP-coupled ligase reaction, activating hydrogencarbonate by forming carboxy phosphate which reacts with ammonia to form carbamoyl phosphate. The sequence is that of Carbamoyl phosphate synthase arginine-specific large chain from Bacillus subtilis (strain 168).